The chain runs to 698 residues: Polyribonucleotide nucleotidyltransferase (698 aa).

Residues Asp-485 and Asp-491 each coordinate Mg(2+). In terms of domain architecture, KH spans 552 to 611 (PRITTIKINPEKIRDVIGKGGAVIRALTEETGTTIELDDDGTVKIASSNGEATKEAIRRI). Residues 621 to 689 (GRVYNGKVIR…RQGRVRLSIK (69 aa)) enclose the S1 motif domain.

The protein belongs to the polyribonucleotide nucleotidyltransferase family. As to quaternary structure, component of the RNA degradosome, which is a multiprotein complex involved in RNA processing and mRNA degradation. Mg(2+) is required as a cofactor.

The protein resides in the cytoplasm. The enzyme catalyses RNA(n+1) + phosphate = RNA(n) + a ribonucleoside 5'-diphosphate. Involved in mRNA degradation. Catalyzes the phosphorolysis of single-stranded polyribonucleotides processively in the 3'- to 5'-direction. The polypeptide is Polyribonucleotide nucleotidyltransferase (Shewanella denitrificans (strain OS217 / ATCC BAA-1090 / DSM 15013)).